The following is a 156-amino-acid chain: Small ribosomal subunit protein uS7 (156 aa).

Belongs to the universal ribosomal protein uS7 family. In terms of assembly, part of the 30S ribosomal subunit. Contacts proteins S9 and S11.

Its function is as follows. One of the primary rRNA binding proteins, it binds directly to 16S rRNA where it nucleates assembly of the head domain of the 30S subunit. Is located at the subunit interface close to the decoding center, probably blocks exit of the E-site tRNA. This Anoxybacillus flavithermus (strain DSM 21510 / WK1) protein is Small ribosomal subunit protein uS7.